The sequence spans 350 residues: MAVFVVLLALVAGVLGNEFSILKSPGSVVFRNGNWPIPGERIPDVAALSMGFSVKEDLSWPGLAVGNLFHRPRATVMVMVKGVNKLALPPGSVISYPLENAVPFSLDSVANSIHSLFSEETPVVLQLAPSEERVYMVGKANSVFEDLSVTLRQLRNRLFQENSVLSSLPLNSLSRNNEVDLLFLSELQVLHDISSLLSRHKHLAKDHSPDLYSLELAGLDEIGKRYGEDSEQFRDASKILVDALQKFADDMYSLYGGNAVVELVTVKSFDTSLIRKTRTILEAKQAKNPASPYNLAYKYNFEYSVVFNMVLWIMIALALAVIITSYNIWNMDPGYDSIIYRMTNQKIRMD.

Positions 1–16 are cleaved as a signal peptide; the sequence is MAVFVVLLALVAGVLG. At 17 to 302 the chain is on the extracellular side; that stretch reads NEFSILKSPG…YNLAYKYNFE (286 aa). A helical membrane pass occupies residues 303 to 323; that stretch reads YSVVFNMVLWIMIALALAVII. Residues 324-350 lie on the Cytoplasmic side of the membrane; that stretch reads TSYNIWNMDPGYDSIIYRMTNQKIRMD. The Mediates retrograde transport to the ER signature appears at 346 to 350; it reads KIRMD.

Interacts with renin. Accessory component of the multisubunit proton-transporting vacuolar (V)-ATPase protein pump. Interacts (via N-terminus) with ATP6AP1 (via N-terminus). Interacts with ATP6V0D1; ATP6V0D1 is a V-ATPase complex subunit and the interaction promotes V-ATPase complex assembly. Interacts with TMEM9; TMEM9 is a V-ATPase assembly regulator and the interaction induces the interaction with ATP6V0D1. Interacts with VMA21 (via N-terminus); VMA21 is a V-ATPase accessory component. In terms of processing, phosphorylated. Proteolytically cleaved by a furin-like convertase in the trans-Golgi network to generate N- and C-terminal fragments. In terms of tissue distribution, expressed in brain, heart, placenta, liver, kidney and pancreas. Barely detectable in lung and skeletal muscles. In the kidney cortex it is restricted to the mesangium of glomeruli. In the coronary and kidney artery it is expressed in the subendothelium, associated to smooth muscles where it colocalizes with REN. Expressed in vascular structures and by syncytiotrophoblast cells in the mature fetal placenta.

Its subcellular location is the endoplasmic reticulum membrane. It localises to the lysosome membrane. The protein resides in the cytoplasmic vesicle. It is found in the autophagosome membrane. The protein localises to the cell projection. Its subcellular location is the dendritic spine membrane. It localises to the axon. The protein resides in the endosome membrane. It is found in the clathrin-coated vesicle membrane. The protein localises to the secretory vesicle. Its subcellular location is the synaptic vesicle membrane. Functionally, multifunctional protein which functions as a renin, prorenin cellular receptor and is involved in the assembly of the lysosomal proton-transporting V-type ATPase (V-ATPase) and the acidification of the endo-lysosomal system. May mediate renin-dependent cellular responses by activating ERK1 and ERK2. By increasing the catalytic efficiency of renin in AGT/angiotensinogen conversion to angiotensin I, may also play a role in the renin-angiotensin system (RAS). Through its function in V-type ATPase (v-ATPase) assembly and acidification of the lysosome it regulates protein degradation and may control different signaling pathways important for proper brain development, synapse morphology and synaptic transmission. In Homo sapiens (Human), this protein is Renin receptor.